The primary structure comprises 159 residues: Ribosomal RNA large subunit methyltransferase H (159 aa).

S-adenosyl-L-methionine-binding positions include Leu76, Gly108, and 127–132 (FSKMTF).

The protein belongs to the RNA methyltransferase RlmH family. As to quaternary structure, homodimer.

It localises to the cytoplasm. It carries out the reaction pseudouridine(1915) in 23S rRNA + S-adenosyl-L-methionine = N(3)-methylpseudouridine(1915) in 23S rRNA + S-adenosyl-L-homocysteine + H(+). Functionally, specifically methylates the pseudouridine at position 1915 (m3Psi1915) in 23S rRNA. This chain is Ribosomal RNA large subunit methyltransferase H, found in Clostridium botulinum (strain Okra / Type B1).